The primary structure comprises 231 residues: Large ribosomal subunit protein uL1 (231 aa).

It belongs to the universal ribosomal protein uL1 family. Part of the 50S ribosomal subunit.

Functionally, binds directly to 23S rRNA. The L1 stalk is quite mobile in the ribosome, and is involved in E site tRNA release. Protein L1 is also a translational repressor protein, it controls the translation of the L11 operon by binding to its mRNA. In Beijerinckia indica subsp. indica (strain ATCC 9039 / DSM 1715 / NCIMB 8712), this protein is Large ribosomal subunit protein uL1.